We begin with the raw amino-acid sequence, 347 residues long: Neutral protease 2 homolog MGG_10927 (347 aa).

Residues 1 to 19 (MKYSVGITALLATLAQGAA) form the signal peptide. Positions 20–176 (VMSKRDIPLD…RSYLAKRTMV (157 aa)) are excised as a propeptide. 2 disulfides stabilise this stretch: C180-C250 and C257-C275. H299 serves as a coordination point for Zn(2+). Residue E300 is part of the active site. H303 provides a ligand contact to Zn(2+).

Belongs to the peptidase M35 family. It depends on Zn(2+) as a cofactor.

Its subcellular location is the secreted. The catalysed reaction is Preferential cleavage of bonds with hydrophobic residues in P1'. Also 3-Asn-|-Gln-4 and 8-Gly-|-Ser-9 bonds in insulin B chain.. In terms of biological role, secreted metalloproteinase that allows assimilation of proteinaceous substrates. Shows high activities on basic nuclear substrates such as histone and protamine. This chain is Neutral protease 2 homolog MGG_10927, found in Pyricularia oryzae (strain 70-15 / ATCC MYA-4617 / FGSC 8958) (Rice blast fungus).